A 482-amino-acid chain; its full sequence is tRNA sulfurtransferase (482 aa).

The THUMP domain maps to K61–R165. Residues L183–I184, K265, G287, and Q296 contribute to the ATP site. An intrachain disulfide couples C344 to C456. Positions V404–P482 constitute a Rhodanese domain. The active-site Cysteine persulfide intermediate is C456.

This sequence belongs to the ThiI family.

The protein localises to the cytoplasm. It catalyses the reaction [ThiI sulfur-carrier protein]-S-sulfanyl-L-cysteine + a uridine in tRNA + 2 reduced [2Fe-2S]-[ferredoxin] + ATP + H(+) = [ThiI sulfur-carrier protein]-L-cysteine + a 4-thiouridine in tRNA + 2 oxidized [2Fe-2S]-[ferredoxin] + AMP + diphosphate. The catalysed reaction is [ThiS sulfur-carrier protein]-C-terminal Gly-Gly-AMP + S-sulfanyl-L-cysteinyl-[cysteine desulfurase] + AH2 = [ThiS sulfur-carrier protein]-C-terminal-Gly-aminoethanethioate + L-cysteinyl-[cysteine desulfurase] + A + AMP + 2 H(+). Its pathway is cofactor biosynthesis; thiamine diphosphate biosynthesis. In terms of biological role, catalyzes the ATP-dependent transfer of a sulfur to tRNA to produce 4-thiouridine in position 8 of tRNAs, which functions as a near-UV photosensor. Also catalyzes the transfer of sulfur to the sulfur carrier protein ThiS, forming ThiS-thiocarboxylate. This is a step in the synthesis of thiazole, in the thiamine biosynthesis pathway. The sulfur is donated as persulfide by IscS. This Vibrio atlanticus (strain LGP32) (Vibrio splendidus (strain Mel32)) protein is tRNA sulfurtransferase.